A 735-amino-acid polypeptide reads, in one-letter code: Glycogen [starch] synthase, muscle (735 aa).

S8 is modified (phosphoserine; by AMPK and PKA). The residue at position 11 (S11) is a Phosphoserine. K39 contacts UDP. Residues H205 and R211 each contribute to the UDP-alpha-D-glucose site. The alpha-D-glucose 6-phosphate site is built by H291, E292, Q294, H297, and K301. R331 is a binding site for UDP. Residue R331 participates in UDP-alpha-D-glucose binding. S412 is subject to Phosphoserine. Position 501 (H501) interacts with alpha-D-glucose 6-phosphate. Positions 510, 512, and 513 each coordinate UDP-alpha-D-glucose. Position 515 (T515) interacts with UDP. 2 residues coordinate alpha-D-glucose 6-phosphate: R582 and R586. Residues 629–735 (DATQGYRYPR…PASSLGEERN (107 aa)) form a disordered region. At S641 the chain carries Phosphoserine; by DYRK2, GSK3-alpha, GSK3-beta and PASK. A phosphoserine; by GSK3-alpha and GSK3-beta mark is found at S645 and S649. S652 carries the post-translational modification Phosphoserine. Position 653 is a phosphoserine; by GSK3-alpha and GSK3-beta (S653). S657 carries the post-translational modification Phosphoserine; by CK2. The span at 658–681 (EDEEEPRDGLPEEDGERYDEDEEA) shows a compositional bias: acidic residues. Basic and acidic residues predominate over residues 682–695 (AKDRRNIRAPEWPR). At S698 the chain carries Phosphoserine. Residues 698 to 735 (SCTSSSGGSKRSNSVDTSSLSTPSEPLSPASSLGEERN) are compositionally biased toward low complexity. At T700 the chain carries Phosphothreonine. Phosphoserine is present on residues S709 and S711. Position 719 is a phosphothreonine (T719). A phosphoserine mark is found at S725 and S729.

The protein belongs to the glycosyltransferase 3 family. Part of the GYS1-GYG1 complex, a heterooctamer composed of a tetramer of GYS1 and 2 dimers of GYG1, where each GYS1 protomer binds to one GYG1 subunit (via GYG1 C-terminus); the GYS1 tetramer may dissociate from GYG1 dimers to continue glycogen polymerization on its own. In terms of processing, phosphorylation at Ser-8 is required for modification of Ser-11 by casein kinase I. Phosphorylated at Ser-641 by PASK, leading to inactivation; phosphorylation by PASK is inhibited by glycogen. Dephosphorylation at Ser-641 and Ser-645 by PP1 activates the enzyme. Phosphorylation at Ser-8 by AMPK inactivates the enzyme activity. Phosphorylated at Ser-641 by DYRK2, leading to inactivation. Primed phosphorylation at Ser-657 (site 5) by CSNK2A1 and CSNK2A2 is required for inhibitory phosphorylation at Ser-641 (site 3a), Ser-645 (site 3b), Ser-649 (site 3c) and Ser-653 (site 4) by GSK3A and GSK3B.

It carries out the reaction [(1-&gt;4)-alpha-D-glucosyl](n) + UDP-alpha-D-glucose = [(1-&gt;4)-alpha-D-glucosyl](n+1) + UDP + H(+). The protein operates within glycan biosynthesis; glycogen biosynthesis. Its activity is regulated as follows. Allosteric activation by glucose-6-phosphate. Phosphorylation reduces the activity towards UDP-glucose. When in the non-phosphorylated state, glycogen synthase does not require glucose-6-phosphate as an allosteric activator; when phosphorylated it does. In terms of biological role, glycogen synthase participates in the glycogen biosynthetic process along with glycogenin and glycogen branching enzyme. Extends the primer composed of a few glucose units formed by glycogenin by adding new glucose units to it. In this context, glycogen synthase transfers the glycosyl residue from UDP-Glc to the non-reducing end of alpha-1,4-glucan. The chain is Glycogen [starch] synthase, muscle from Oryctolagus cuniculus (Rabbit).